The primary structure comprises 88 residues: Small ribosomal subunit protein bS16 (88 aa).

It belongs to the bacterial ribosomal protein bS16 family.

The sequence is that of Small ribosomal subunit protein bS16 from Geobacter sp. (strain M21).